A 748-amino-acid polypeptide reads, in one-letter code: Photosystem I P700 chlorophyll a apoprotein A1 (748 aa).

The next 8 helical transmembrane spans lie at 70–93, 156–179, 195–219, 291–309, 346–369, 385–411, 433–455, and 530–548; these read VFSA…FHGA, LYST…YHYH, LNHH…HVSL, TAHH…GHQY, WHAQ…HHMY, LSLF…IFLV, AIIS…LYIH, and FLVH…LILL. Cys572 and Cys581 together coordinate [4Fe-4S] cluster. 2 helical membrane-spanning segments follow: residues 588-609 and 662-684; these read HVFL…HFSW and LSAY…MFLF. His673 lines the chlorophyll a' pocket. Met681 and Tyr689 together coordinate chlorophyll a. Trp690 lines the phylloquinone pocket. The helical transmembrane segment at 722–742 threads the bilayer; it reads AVGVAHYLLGGIATTWAFFLA.

This sequence belongs to the PsaA/PsaB family. As to quaternary structure, the PsaA/B heterodimer binds the P700 chlorophyll special pair and subsequent electron acceptors. PSI consists of a core antenna complex that captures photons, and an electron transfer chain that converts photonic excitation into a charge separation. The eukaryotic PSI reaction center is composed of at least 11 subunits. P700 is a chlorophyll a/chlorophyll a' dimer, A0 is one or more chlorophyll a, A1 is one or both phylloquinones and FX is a shared 4Fe-4S iron-sulfur center. is required as a cofactor.

Its subcellular location is the plastid. It localises to the chloroplast thylakoid membrane. It catalyses the reaction reduced [plastocyanin] + hnu + oxidized [2Fe-2S]-[ferredoxin] = oxidized [plastocyanin] + reduced [2Fe-2S]-[ferredoxin]. Functionally, psaA and PsaB bind P700, the primary electron donor of photosystem I (PSI), as well as the electron acceptors A0, A1 and FX. PSI is a plastocyanin-ferredoxin oxidoreductase, converting photonic excitation into a charge separation, which transfers an electron from the donor P700 chlorophyll pair to the spectroscopically characterized acceptors A0, A1, FX, FA and FB in turn. Oxidized P700 is reduced on the lumenal side of the thylakoid membrane by plastocyanin. The polypeptide is Photosystem I P700 chlorophyll a apoprotein A1 (Chaetosphaeridium globosum (Charophycean green alga)).